The chain runs to 493 residues: 3-octaprenyl-4-hydroxybenzoate carboxy-lyase (493 aa).

Position 177 (Asn177) interacts with Mn(2+). Prenylated FMN is bound by residues 180–182 (IYR), 194–196 (RWL), and 199–200 (RG). Glu243 contributes to the Mn(2+) binding site. Residue Asp292 is the Proton donor of the active site.

Belongs to the UbiD family. As to quaternary structure, homohexamer. Prenylated FMN serves as cofactor. The cofactor is Mn(2+).

The protein resides in the cell membrane. It catalyses the reaction a 4-hydroxy-3-(all-trans-polyprenyl)benzoate + H(+) = a 2-(all-trans-polyprenyl)phenol + CO2. It participates in cofactor biosynthesis; ubiquinone biosynthesis. Its function is as follows. Catalyzes the decarboxylation of 3-octaprenyl-4-hydroxy benzoate to 2-octaprenylphenol, an intermediate step in ubiquinone biosynthesis. This Colwellia psychrerythraea (strain 34H / ATCC BAA-681) (Vibrio psychroerythus) protein is 3-octaprenyl-4-hydroxybenzoate carboxy-lyase.